The following is a 223-amino-acid chain: Rho-related protein racE (223 aa).

GTP is bound at residue 18 to 25 (GDGAVGKT). Positions 40–48 (YVPTVFENY) match the Effector region motif. GTP contacts are provided by residues 65 to 69 (DTAGQ) and 123 to 126 (TKID). Positions 187–223 (GMDKKSQDGSSSASGVPSGDKPTKGKAGKKKSGCIIL) are disordered. The span at 210 to 223 (KGKAGKKKSGCIIL) shows a compositional bias: basic residues. C220 carries the cysteine methyl ester modification. A lipid anchor (S-geranylgeranyl cysteine) is attached at C220. Positions 221–223 (IIL) are cleaved as a propeptide — removed in mature form.

It belongs to the small GTPase superfamily. Rho family. In terms of assembly, interacts with rgaA.

The protein resides in the cell membrane. Its function is as follows. Specifically required for cytokinesis. In Dictyostelium discoideum (Social amoeba), this protein is Rho-related protein racE (racE).